We begin with the raw amino-acid sequence, 616 residues long: Chaperone protein HscA (616 aa).

The protein belongs to the heat shock protein 70 family.

Chaperone involved in the maturation of iron-sulfur cluster-containing proteins. Has a low intrinsic ATPase activity which is markedly stimulated by HscB. Involved in the maturation of IscU. The chain is Chaperone protein HscA from Salmonella enteritidis PT4 (strain P125109).